The sequence spans 138 residues: Small ribosomal subunit protein uS11c (138 aa).

A disordered region spans residues 1-22; that stretch reads MAKAIPKISSRRNGRIGSRKGA. Positions 9–22 are enriched in basic residues; sequence SSRRNGRIGSRKGA.

The protein belongs to the universal ribosomal protein uS11 family. As to quaternary structure, part of the 30S ribosomal subunit.

Its subcellular location is the plastid. The protein localises to the chloroplast. This is Small ribosomal subunit protein uS11c from Nicotiana tomentosiformis (Tobacco).